The chain runs to 299 residues: Nitrogenase iron protein (299 aa).

Residue G11–S18 coordinates ATP. Residue C99 participates in [4Fe-4S] cluster binding. R102 carries the post-translational modification ADP-ribosylarginine; by dinitrogenase reductase ADP-ribosyltransferase. Residue C133 coordinates [4Fe-4S] cluster.

Belongs to the NifH/BchL/ChlL family. As to quaternary structure, homodimer. [4Fe-4S] cluster serves as cofactor. Post-translationally, the reversible ADP-ribosylation of Arg-102 inactivates the nitrogenase reductase and regulates nitrogenase activity.

It carries out the reaction N2 + 8 reduced [2Fe-2S]-[ferredoxin] + 16 ATP + 16 H2O = H2 + 8 oxidized [2Fe-2S]-[ferredoxin] + 2 NH4(+) + 16 ADP + 16 phosphate + 6 H(+). Functionally, the key enzymatic reactions in nitrogen fixation are catalyzed by the nitrogenase complex, which has 2 components: the iron protein and the molybdenum-iron protein. In Rhodopseudomonas palustris (strain BisB5), this protein is Nitrogenase iron protein.